Consider the following 446-residue polypeptide: 5-methylthioadenosine/S-adenosylhomocysteine deaminase (446 aa).

The Zn(2+) site is built by His72 and His74. Residues Glu101 and His194 each contribute to the substrate site. His221 contacts Zn(2+). Substrate contacts are provided by Glu224 and Asp309. Asp309 is a Zn(2+) binding site.

Belongs to the metallo-dependent hydrolases superfamily. MTA/SAH deaminase family. It depends on Zn(2+) as a cofactor.

It carries out the reaction S-adenosyl-L-homocysteine + H2O + H(+) = S-inosyl-L-homocysteine + NH4(+). The catalysed reaction is S-methyl-5'-thioadenosine + H2O + H(+) = S-methyl-5'-thioinosine + NH4(+). Functionally, catalyzes the deamination of 5-methylthioadenosine and S-adenosyl-L-homocysteine into 5-methylthioinosine and S-inosyl-L-homocysteine, respectively. Is also able to deaminate adenosine. In Saccharophagus degradans (strain 2-40 / ATCC 43961 / DSM 17024), this protein is 5-methylthioadenosine/S-adenosylhomocysteine deaminase.